Here is a 189-residue protein sequence, read N- to C-terminus: Phosphoheptose isomerase (189 aa).

Positions 34–189 (LVEAFRKGNK…CDLVEKALFA (156 aa)) constitute an SIS domain. 49–51 (NGG) is a binding site for substrate. The Zn(2+) site is built by His-58 and Glu-62. Substrate contacts are provided by residues Glu-62, 91–92 (ND), 117–119 (STS), Ser-122, and Gln-169. Positions 169 and 177 each coordinate Zn(2+).

It belongs to the SIS family. GmhA subfamily. Homotetramer. Zn(2+) serves as cofactor.

It localises to the cytoplasm. It catalyses the reaction 2 D-sedoheptulose 7-phosphate = D-glycero-alpha-D-manno-heptose 7-phosphate + D-glycero-beta-D-manno-heptose 7-phosphate. It functions in the pathway carbohydrate biosynthesis; D-glycero-D-manno-heptose 7-phosphate biosynthesis; D-glycero-alpha-D-manno-heptose 7-phosphate and D-glycero-beta-D-manno-heptose 7-phosphate from sedoheptulose 7-phosphate: step 1/1. In terms of biological role, catalyzes the isomerization of sedoheptulose 7-phosphate in D-glycero-D-manno-heptose 7-phosphate. The polypeptide is Phosphoheptose isomerase (Pelobacter propionicus (strain DSM 2379 / NBRC 103807 / OttBd1)).